A 151-amino-acid polypeptide reads, in one-letter code: NPC intracellular cholesterol transporter 2 (151 aa).

A signal peptide spans 1–19; it reads MRFLAATFLLLALSTAAQA. Intrachain disulfides connect Cys27–Cys140, Cys42–Cys47, and Cys93–Cys99. Asn58 carries N-linked (GlcNAc...) asparagine glycosylation. N6-acetyllysine is present on Lys116. N-linked (GlcNAc...) asparagine glycosylation is present at Asn135.

Belongs to the NPC2 family. As to quaternary structure, interacts with NPC1 (via the second lumenal domain) in a cholestrol-dependent manner. Interacts with NUS1/NgBR, the interaction stabilizes NCP2 and regulates cholesterol trafficking. Interacts with DHDDS. Interacts with NEDD4L (via C2 domain). Interacts with NPC1L1. Detected in gallbladder bile. Detected in fibroblasts, kidney, liver, spleen, small intestine, placenta and testis (at protein level). Epididymis.

It localises to the secreted. The protein localises to the endoplasmic reticulum. Its subcellular location is the lysosome. It catalyses the reaction cholesterol(in) = cholesterol(out). Functionally, intracellular cholesterol transporter which acts in concert with NPC1 and plays an important role in the egress of cholesterol from the lysosomal compartment. Unesterified cholesterol that has been released from LDLs in the lumen of the late endosomes/lysosomes is transferred by NPC2 to the cholesterol-binding pocket in the N-terminal domain of NPC1. May bind and mobilize cholesterol that is associated with membranes. NPC2 binds cholesterol with a 1:1 stoichiometry. Can bind a variety of sterols, including lathosterol, desmosterol and the plant sterols stigmasterol and beta-sitosterol. The secreted form of NCP2 regulates biliary cholesterol secretion via stimulation of ABCG5/ABCG8-mediated cholesterol transport. This chain is NPC intracellular cholesterol transporter 2, found in Homo sapiens (Human).